Here is a 136-residue protein sequence, read N- to C-terminus: Nucleoside diphosphate kinase (136 aa).

Positions 10, 58, 86, 92, 104, and 114 each coordinate ATP. Residue His-117 is the Pros-phosphohistidine intermediate of the active site.

Belongs to the NDK family. In terms of assembly, homotetramer. Mg(2+) is required as a cofactor.

The protein localises to the cytoplasm. It catalyses the reaction a 2'-deoxyribonucleoside 5'-diphosphate + ATP = a 2'-deoxyribonucleoside 5'-triphosphate + ADP. The enzyme catalyses a ribonucleoside 5'-diphosphate + ATP = a ribonucleoside 5'-triphosphate + ADP. In terms of biological role, major role in the synthesis of nucleoside triphosphates other than ATP. The ATP gamma phosphate is transferred to the NDP beta phosphate via a ping-pong mechanism, using a phosphorylated active-site intermediate. The chain is Nucleoside diphosphate kinase from Mycolicibacterium vanbaalenii (strain DSM 7251 / JCM 13017 / BCRC 16820 / KCTC 9966 / NRRL B-24157 / PYR-1) (Mycobacterium vanbaalenii).